Consider the following 289-residue polypeptide: ATP synthase gamma chain (289 aa).

The protein belongs to the ATPase gamma chain family. In terms of assembly, F-type ATPases have 2 components, CF(1) - the catalytic core - and CF(0) - the membrane proton channel. CF(1) has five subunits: alpha(3), beta(3), gamma(1), delta(1), epsilon(1). CF(0) has three main subunits: a, b and c.

The protein resides in the cell inner membrane. Its function is as follows. Produces ATP from ADP in the presence of a proton gradient across the membrane. The gamma chain is believed to be important in regulating ATPase activity and the flow of protons through the CF(0) complex. The protein is ATP synthase gamma chain of Haemophilus influenzae (strain ATCC 51907 / DSM 11121 / KW20 / Rd).